A 446-amino-acid polypeptide reads, in one-letter code: Glutamyl-tRNA reductase (446 aa).

Residues 49 to 52 (TCNR), Ser109, 114 to 116 (ETQ), and Gln120 each bind substrate. Cys50 functions as the Nucleophile in the catalytic mechanism. 189–194 (GAGETG) serves as a coordination point for NADP(+).

Belongs to the glutamyl-tRNA reductase family. In terms of assembly, homodimer.

It carries out the reaction (S)-4-amino-5-oxopentanoate + tRNA(Glu) + NADP(+) = L-glutamyl-tRNA(Glu) + NADPH + H(+). It participates in porphyrin-containing compound metabolism; protoporphyrin-IX biosynthesis; 5-aminolevulinate from L-glutamyl-tRNA(Glu): step 1/2. Its function is as follows. Catalyzes the NADPH-dependent reduction of glutamyl-tRNA(Glu) to glutamate 1-semialdehyde (GSA). This Exiguobacterium sibiricum (strain DSM 17290 / CCUG 55495 / CIP 109462 / JCM 13490 / 255-15) protein is Glutamyl-tRNA reductase.